The sequence spans 407 residues: Transcriptional regulator alnR (407 aa).

The zn(2)-C6 fungal-type DNA-binding region spans 23–53 (SCDTCQEAKVKCSQHKPSCHRCLRHRQPCVY). The interval 53–85 (YSPQRRSGRPPKRPSPSSRLGPESNNSGDDIHN) is disordered. The segment covering 75-85 (ESNNSGDDIHN) has biased composition (polar residues).

Its subcellular location is the nucleus. Functionally, transcriptional regulator involved in the positive regulation of the expression of the gene cluster that mediates the biosynthesis of asperlin, a polyketide showing anti-inflammatory, antitumor and antibiotic activities. In Emericella nidulans (strain FGSC A4 / ATCC 38163 / CBS 112.46 / NRRL 194 / M139) (Aspergillus nidulans), this protein is Transcriptional regulator alnR.